The primary structure comprises 65 residues: Large ribosomal subunit protein bL35 (65 aa).

Residues 20–42 (GKVRRHHANASHIMTTKTTKRKR) form a disordered region.

This sequence belongs to the bacterial ribosomal protein bL35 family.

This Syntrophus aciditrophicus (strain SB) protein is Large ribosomal subunit protein bL35.